Here is a 35-residue protein sequence, read N- to C-terminus: uncharacterized protein (35 aa).

The first 18 residues, 1–18 (MRSLVFVQLSLLSWEIFC), serve as a signal peptide directing secretion.

This is an uncharacterized protein from Saccharomyces cerevisiae (strain ATCC 204508 / S288c) (Baker's yeast).